Reading from the N-terminus, the 465-residue chain is 2-methylcitrate synthase, mitochondrial (465 aa).

CoA is bound by residues arginine 72 and lysine 190. Position 265 (histidine 265) interacts with oxaloacetate. Leucine 300 contributes to the CoA binding site. Histidine 301 is a catalytic residue. Positions 342, 344, and 345 each coordinate CoA. The oxaloacetate site is built by histidine 347 and arginine 356. The active site involves histidine 347. Positions 394, 395, and 400 each coordinate CoA. The active site involves aspartate 402. Residues arginine 428 and arginine 448 each coordinate oxaloacetate.

It belongs to the citrate synthase family. As to quaternary structure, homodimer.

It is found in the mitochondrion matrix. It catalyses the reaction propanoyl-CoA + oxaloacetate + H2O = (2S,3S)-2-methylcitrate + CoA + H(+). The enzyme catalyses oxaloacetate + acetyl-CoA + H2O = citrate + CoA + H(+). Its pathway is organic acid metabolism; propanoate degradation. With respect to regulation, activity is inhibited by p-chloromercuribenzoate (pCMB), monoiodoacetamide, H(2)O(2), ATP, ADP, NADH, NADPH, Hg(2+) and Zn(2+). In terms of biological role, component of the methylcitrate cycle that catalyzes the synthesis of (2S,3S)-2-methylcitrate from propionyl-CoA and oxaloacetate. Plays an important role in detoxification of propionyl-CoA, an inhibitor of both primary and secondary metabolism. Also has citrate synthase activity using as substrates acetyl-CoA and oxaloacetate. The sequence is that of 2-methylcitrate synthase, mitochondrial from Yarrowia lipolytica (strain CLIB 122 / E 150) (Yeast).